The primary structure comprises 267 residues: Orotidine 5'-phosphate decarboxylase (267 aa).

Lys93 functions as the Proton donor in the catalytic mechanism.

The protein belongs to the OMP decarboxylase family. Type 2 subfamily.

The catalysed reaction is orotidine 5'-phosphate + H(+) = UMP + CO2. The protein operates within pyrimidine metabolism; UMP biosynthesis via de novo pathway; UMP from orotate: step 2/2. The protein is Orotidine 5'-phosphate decarboxylase of Halobacterium salinarum (strain ATCC 29341 / DSM 671 / R1).